The chain runs to 173 residues: Large ribosomal subunit protein bL9 (173 aa).

The protein belongs to the bacterial ribosomal protein bL9 family.

Its function is as follows. Binds to the 23S rRNA. The protein is Large ribosomal subunit protein bL9 of Rickettsia bellii (strain RML369-C).